Consider the following 616-residue polypeptide: Dihydroxy-acid dehydratase (616 aa).

Position 81 (aspartate 81) interacts with Mg(2+). [2Fe-2S] cluster is bound at residue cysteine 122. Residues aspartate 123 and lysine 124 each contribute to the Mg(2+) site. Lysine 124 carries the post-translational modification N6-carboxylysine. Cysteine 195 lines the [2Fe-2S] cluster pocket. A Mg(2+)-binding site is contributed by glutamate 491. Serine 517 acts as the Proton acceptor in catalysis.

The protein belongs to the IlvD/Edd family. Homodimer. [2Fe-2S] cluster serves as cofactor. Requires Mg(2+) as cofactor.

The catalysed reaction is (2R)-2,3-dihydroxy-3-methylbutanoate = 3-methyl-2-oxobutanoate + H2O. The enzyme catalyses (2R,3R)-2,3-dihydroxy-3-methylpentanoate = (S)-3-methyl-2-oxopentanoate + H2O. The protein operates within amino-acid biosynthesis; L-isoleucine biosynthesis; L-isoleucine from 2-oxobutanoate: step 3/4. Its pathway is amino-acid biosynthesis; L-valine biosynthesis; L-valine from pyruvate: step 3/4. In terms of biological role, functions in the biosynthesis of branched-chain amino acids. Catalyzes the dehydration of (2R,3R)-2,3-dihydroxy-3-methylpentanoate (2,3-dihydroxy-3-methylvalerate) into 2-oxo-3-methylpentanoate (2-oxo-3-methylvalerate) and of (2R)-2,3-dihydroxy-3-methylbutanoate (2,3-dihydroxyisovalerate) into 2-oxo-3-methylbutanoate (2-oxoisovalerate), the penultimate precursor to L-isoleucine and L-valine, respectively. This is Dihydroxy-acid dehydratase from Yersinia pseudotuberculosis serotype O:1b (strain IP 31758).